The sequence spans 322 residues: ADP,ATP carrier protein (322 aa).

Solcar repeat units lie at residues Ser25 to Met118, Lys130 to Val222, and Gly230 to Leu316. The next 5 membrane-spanning stretches (helical) occupy residues Phe27–Leu54, Thr95–Phe119, Tyr128–Leu148, Phe198–Leu219, and Leu233–Leu253. Positions 100 and 112 each coordinate ADP. Arg257 contributes to the ADP binding site. The tract at residues Arg257 to Met262 is important for transport activity. Positions Arg257–Met262 match the Nucleotide carrier signature motif motif. A helical membrane pass occupies residues Ala293 to Val313.

This sequence belongs to the mitochondrial carrier (TC 2.A.29) family. As to quaternary structure, monomer.

The protein resides in the mitochondrion inner membrane. It carries out the reaction ADP(in) + ATP(out) = ADP(out) + ATP(in). The matrix-open state (m-state) is inhibited by the membrane-permeable bongkrekic acid (BKA). The cytoplasmic-open state (c-state) is inhibited by the membrane-impermeable toxic inhibitor carboxyatractyloside (CATR). Its function is as follows. ADP:ATP antiporter that mediates import of ADP into the mitochondrial matrix for ATP synthesis, and export of ATP out to fuel the cell. Cycles between the cytoplasmic-open state (c-state) and the matrix-open state (m-state): operates by the alternating access mechanism with a single substrate-binding site intermittently exposed to either the cytosolic (c-state) or matrix (m-state) side of the inner mitochondrial membrane. The protein is ADP,ATP carrier protein (anc1) of Schizosaccharomyces pombe (strain 972 / ATCC 24843) (Fission yeast).